Here is a 288-residue protein sequence, read N- to C-terminus: Oxaloacetate decarboxylase (288 aa).

Position 47 (serine 47) interacts with substrate. Aspartate 85 lines the Mg(2+) pocket. Arginine 156 and histidine 232 together coordinate substrate.

Belongs to the isocitrate lyase/PEP mutase superfamily. Oxaloacetate decarboxylase family. Homotetramer; dimer of dimers. The cofactor is Mg(2+).

It carries out the reaction oxaloacetate + H(+) = pyruvate + CO2. Catalyzes the decarboxylation of oxaloacetate into pyruvate. Seems to play a role in maintaining cellular concentrations of bicarbonate and pyruvate. In Rhodopseudomonas palustris (strain BisB18), this protein is Oxaloacetate decarboxylase.